The chain runs to 146 residues: SsrA-binding protein (146 aa).

Residues 127–139 show a composition bias toward basic and acidic residues; it reads KRQTIKDRDNSRE. The segment at 127–146 is disordered; sequence KRQTIKDRDNSREARKHIRV.

It belongs to the SmpB family.

Its subcellular location is the cytoplasm. Its function is as follows. Required for rescue of stalled ribosomes mediated by trans-translation. Binds to transfer-messenger RNA (tmRNA), required for stable association of tmRNA with ribosomes. tmRNA and SmpB together mimic tRNA shape, replacing the anticodon stem-loop with SmpB. tmRNA is encoded by the ssrA gene; the 2 termini fold to resemble tRNA(Ala) and it encodes a 'tag peptide', a short internal open reading frame. During trans-translation Ala-aminoacylated tmRNA acts like a tRNA, entering the A-site of stalled ribosomes, displacing the stalled mRNA. The ribosome then switches to translate the ORF on the tmRNA; the nascent peptide is terminated with the 'tag peptide' encoded by the tmRNA and targeted for degradation. The ribosome is freed to recommence translation, which seems to be the essential function of trans-translation. The polypeptide is SsrA-binding protein (Malacoplasma penetrans (strain HF-2) (Mycoplasma penetrans)).